The primary structure comprises 77 residues: EMBRYO SURROUNDING FACTOR 1-like protein 9 (77 aa).

An N-terminal signal peptide occupies residues 1-22 (MSSSRFLILCIILISFFPLHEC). 4 cysteine pairs are disulfide-bonded: Cys-38/Cys-54, Cys-43/Cys-75, Cys-52/Cys-71, and Cys-55/Cys-64.

This sequence belongs to the MEG family. As to expression, expressed in flowers.

In Arabidopsis thaliana (Mouse-ear cress), this protein is EMBRYO SURROUNDING FACTOR 1-like protein 9 (ESFL9).